A 457-amino-acid chain; its full sequence is Protein translocase subunit SecY (457 aa).

Residues 1–20 lie on the Cytoplasmic side of the membrane; sequence MGVIDVLAAVGERFPAVRKP. The chain crosses the membrane as a helical span at residues 21 to 47; the sequence is ERKPTLYRRLAWTGVILVLYFIMSNIP. The Extracellular segment spans residues 48-59; sequence LYGIPPQNIGGQ. The segment at residues 60–67 is an intramembrane region (helical); sequence VDLQRIIF. Residues 60 to 88 form a discontinuously helical membrane-spanning segment; sequence VDLQRIIFASSAGTLMELGIGPIVTASLI. Residues 68–79 lie within the membrane without spanning it; sequence ASSAGTLMELGI. The helical intramembrane region spans 80–88; that stretch reads GPIVTASLI. At 89 to 109 the chain is on the cytoplasmic side; sequence IQVLVGAKIIKLDLADPEGRR. A helical membrane pass occupies residues 110–134; that stretch reads KFTSAQKVLALAFAALEAVAFTVGG. The Extracellular segment spans residues 135-146; sequence RYWVGTAIEPGP. The helical transmembrane segment at 147 to 171 threads the bilayer; sequence LDYALVSLQLFLGALLVIYFDEVMQ. Residues 172-178 are Cytoplasmic-facing; sequence KGWGIGS. A helical membrane pass occupies residues 179–197; it reads AISLFILAGVAQGVVWSIF. At 198–229 the chain is on the extracellular side; that stretch reads GTIPGVAQDYGLVPAIISNPDLTLLARPNGFP. The helical transmembrane segment at 230–251 threads the bilayer; that stretch reads DLTGFFTTLAAIILLVYLQAMR. Residues 252-276 are Cytoplasmic-facing; it reads VEIPITSERFKGIRSRVPLQFIYVT. Residues 277 to 298 form a helical membrane-spanning segment; that stretch reads NIPILLVGILVSDLLLVQRLLA. At 299–332 the chain is on the extracellular side; sequence DYLGVESRAYQIYSSIVYYLSPPRGVVQSIADPV. A helical transmembrane segment spans residues 333–352; it reads KTAVFIASWTVLSIVFGYMW. Residues 353 to 395 lie on the Cytoplasmic side of the membrane; sequence VEIAGLNPREQAERLIKGGLAIPGMRSDPRVLERVLRRYIYPL. A helical membrane pass occupies residues 396-414; sequence TFLSSLIVAALVIVADIFG. Residues 415–417 lie on the Extracellular side of the membrane; it reads AYG. Residues 418 to 432 form a helical membrane-spanning segment; that stretch reads TGTGLLLAVGIINQY. Topologically, residues 433-457 are cytoplasmic; sequence YAMITRERALETYPLLRRILGEEVV.

This sequence belongs to the SecY/SEC61-alpha family. Component of the Sec protein translocase complex. Heterotrimer consisting of alpha (SecY), beta (SecG) and gamma (SecE) subunits. The heterotrimers can form oligomers, although 1 heterotrimer is thought to be able to translocate proteins. Interacts with the ribosome. May interact with SecDF, and other proteins may be involved.

The protein resides in the cell membrane. Functionally, the central subunit of the protein translocation channel SecYEG. Consists of two halves formed by TMs 1-5 and 6-10. These two domains form a lateral gate at the front which open onto the bilayer between TMs 2 and 7, and are clamped together by SecE at the back. The channel is closed by both a pore ring composed of hydrophobic SecY resides and a short helix (helix 2A) on the extracellular side of the membrane which forms a plug. The plug probably moves laterally to allow the channel to open. The ring and the pore may move independently. The chain is Protein translocase subunit SecY from Aeropyrum pernix (strain ATCC 700893 / DSM 11879 / JCM 9820 / NBRC 100138 / K1).